Reading from the N-terminus, the 882-residue chain is Probable LRR receptor-like serine/threonine-protein kinase At1g12460 (882 aa).

Positions 1-21 (MRKVHLFLVLVHFIYISTSRS) are cleaved as a signal peptide. Topologically, residues 22–515 (DSISERDILL…SRNSDALSIS (494 aa)) are extracellular. Asn-76 carries N-linked (GlcNAc...) asparagine glycosylation. 16 LRR repeats span residues 92–113 (FIRV…DYFK), 116–138 (TLWT…ISEL), 140–162 (SLRF…LFKF), 165–187 (KTKF…IVNC), 189–210 (NLVG…RICD), 213–235 (VLEY…IQKC), 237–258 (RLIL…AVLT), 261–283 (NITY…VDCS), 285–308 (SLEF…MGCK), 309–331 (SLKL…IGKM), 333–355 (SLSV…IGSL), 357–379 (FLQV…ISNC), 381–404 (VLLE…LNLT), 405–427 (NIKI…LGNL), 429–451 (KVQF…LGSL), and 453–475 (TLTH…PMIQ). Asn-121 carries an N-linked (GlcNAc...) asparagine glycan. Residues Asn-261 and Asn-266 are each glycosylated (N-linked (GlcNAc...) asparagine). N-linked (GlcNAc...) asparagine glycans are attached at residues Asn-321 and Asn-341. Asn-402, Asn-417, and Asn-426 each carry an N-linked (GlcNAc...) asparagine glycan. Residues Asn-458 and Asn-463 are each glycosylated (N-linked (GlcNAc...) asparagine). The helical transmembrane segment at 516–536 (VIIVIIAAAVILFGVCIVLAL) threads the bilayer. Residues 537–882 (NLRARKRRKD…LESIRNGFGS (346 aa)) are Cytoplasmic-facing. Position 589 is a phosphothreonine (Thr-589). The Protein kinase domain occupies 593–876 (LDKENIIGMG…AEVVQVLESI (284 aa)). ATP contacts are provided by residues 599 to 607 (IGMGSIGSV) and Lys-621. Tyr-770 carries the post-translational modification Phosphotyrosine.

The protein belongs to the protein kinase superfamily. Ser/Thr protein kinase family.

It localises to the cell membrane. It catalyses the reaction L-seryl-[protein] + ATP = O-phospho-L-seryl-[protein] + ADP + H(+). The enzyme catalyses L-threonyl-[protein] + ATP = O-phospho-L-threonyl-[protein] + ADP + H(+). The protein is Probable LRR receptor-like serine/threonine-protein kinase At1g12460 of Arabidopsis thaliana (Mouse-ear cress).